The sequence spans 406 residues: GTPase Obg (406 aa).

One can recognise an Obg domain in the interval 1–159; sequence MRFVDEAVIT…REIRLELKVL (159 aa). Residues 120–143 are disordered; sequence GGEGGLGNTHFKSSTNRAPRKCTT. One can recognise an OBG-type G domain in the interval 160–333; the sequence is ADVGLLGMPN…VVYYLMDQIE (174 aa). GTP contacts are provided by residues 166–173, 191–195, 213–216, 283–286, and 314–316; these read GMPNAGKS, FTTMV, DIPG, NKLD, and SGL. Mg(2+) contacts are provided by S173 and T193. Residues 381–406 form a disordered region; sequence ESMMDDDDDFDDDEDDGDVESIYVRD. Acidic residues predominate over residues 383 to 399; it reads MMDDDDDFDDDEDDGDV.

The protein belongs to the TRAFAC class OBG-HflX-like GTPase superfamily. OBG GTPase family. As to quaternary structure, monomer. Mg(2+) serves as cofactor.

The protein resides in the cytoplasm. Its function is as follows. An essential GTPase which binds GTP, GDP and possibly (p)ppGpp with moderate affinity, with high nucleotide exchange rates and a fairly low GTP hydrolysis rate. Plays a role in control of the cell cycle, stress response, ribosome biogenesis and in those bacteria that undergo differentiation, in morphogenesis control. This is GTPase Obg from Acinetobacter baumannii (strain ACICU).